Here is an 876-residue protein sequence, read N- to C-terminus: MEMINIQDLANEVDMSVDRLVQVCIKIGILKTKYDTITQLEKLTILNYLNENLKNSNKNVLMLKRKIRSTVKIFSSGGKNKCISIEIRKNKRYSKSNDDIKTFLEKNKDINLNKSEIVLSAKEDSKIFVSHSKDNINSNINDTCTIRKKFNKNFKKQQKINILSEKEDKNNLDNVLNVEQGSKKKINFKNVVLEEKKENKVKFSNYIKLSEKYNTRKVSNFLTSKNIRDHNNVEKHRRNRNKILRNKHQKDNFSFEKNLSDKNIKLDNCIHKKSIKNKKESLLKQVFKKPLRAINRNIILSSAISIFNLANKMAVKSSEIIKMMARLGYTVTINQIIDQDIAQLVAEEMGHKVTICYENKLEDKIMRDRDFGDGIKKTRPPIITIMGHVDHGKTSLLDKIRLTRVADSEPGRITQHIGAYHIKINNKIITFLDTPGHSAFTAMRARGAQVTDIVILVIAIDDGIKPQTIEAIQHAQAASVPIIIAINKIDKLITNIEKIKNELTKYNILPEEWGGDNIFVNISAKSGEGIESLLNAILTQSEMLELKSISNGMASGLVIESYLDKGRGPTAIILIKEGKLNKGDIVLCGFEYGKVRSIRDDLENEVNSIGPSIPVKILGLSGIPLAGDKIVVVRDEKQAREVATYRQKKFKEQKMSKQRQLKSLDIFEDVKRSSNPSLNIVIKSDVQGSLEAISYSLLKLSNDEIKINIIGKGVGGITETDVLLAAASNAIIIGFNVRADSSAKRIIEFENVDFRYYSVIYQIIDEIKNCICGMLSPKYQQKIIGLANVRSIFKSPKIGVIAGCIVMEGIIKRNSIIQILRNNVVIHKGELISLRRFKEDVSEVRCGVECGIGMKNFNDICIEDIIEVFETIEIKQ.

Residues threonine 378 to lysine 547 enclose the tr-type G domain. Residues glycine 387–threonine 394 form a G1 region. Residue glycine 387–threonine 394 coordinates GTP. The segment at arginine 412–histidine 416 is G2. A G3 region spans residues aspartate 433 to glycine 436. GTP contacts are provided by residues aspartate 433–histidine 437 and asparagine 487–aspartate 490. Positions asparagine 487–aspartate 490 are G4. Positions serine 523–lysine 525 are G5.

It belongs to the TRAFAC class translation factor GTPase superfamily. Classic translation factor GTPase family. IF-2 subfamily.

The protein localises to the cytoplasm. Functionally, one of the essential components for the initiation of protein synthesis. Protects formylmethionyl-tRNA from spontaneous hydrolysis and promotes its binding to the 30S ribosomal subunits. Also involved in the hydrolysis of GTP during the formation of the 70S ribosomal complex. This is Translation initiation factor IF-2 from Buchnera aphidicola subsp. Baizongia pistaciae (strain Bp).